Consider the following 219-residue polypeptide: Phosphatidylinositol phosphate synthase (219 aa).

A CDP-1,2-diacyl-sn-glycerol is bound at residue 29 to 32 (NQLT). Transmembrane regions (helical) follow at residues 31–47 (LTLV…LLLI) and 53–72 (IWAA…DGTV). 2 residues coordinate Mg(2+): Asp-66 and Asp-69. A CDP-1,2-diacyl-sn-glycerol-binding residues include Gly-70, Arg-74, and Thr-80. Mg(2+)-binding residues include Asp-87 and Asp-91. Residue Asp-91 is the Proton acceptor of the active site. Helical transmembrane passes span 93–110 (ITDG…VYSY), 116–133 (LVAA…ISYV), 154–171 (RLIV…GVPY), and 177–194 (LWAL…RLVM).

It belongs to the CDP-alcohol phosphatidyltransferase class-I family. Homodimer. The cofactor is Mg(2+).

The protein localises to the cell membrane. The enzyme catalyses a CDP-1,2-diacyl-sn-glycerol + 1D-myo-inositol 3-phosphate = a 1,2-diacyl-sn-glycero-3-phospho-(1D-myo-inositol-3-phosphate) + CMP + H(+). It carries out the reaction 1,2-di-(9Z-octadecenoyl)-sn-glycero-3-cytidine-5'-diphosphate + 1D-myo-inositol 3-phosphate = 1,2-di-(9Z-octadecenoyl)-sn-glycero-3-phospho-(1D-myo-inositol-3-phosphate) + CMP + H(+). It participates in phospholipid metabolism; phosphatidylinositol phosphate biosynthesis. In terms of biological role, catalyzes the conjugation of the 1'-hydroxyl group of D-myo-inositol-3-phosphate (also named L-myo-inositol-1-phosphate) with a lipid tail of cytidine diphosphate diacylglycerol (CDP-DAG), forming phosphatidylinositol phosphate (PIP) and CMP. PIP is a precursor of phosphatidylinositol (PI) which is an essential lipid required for cell wall formation. This is Phosphatidylinositol phosphate synthase from Corynebacterium glutamicum (strain ATCC 13032 / DSM 20300 / JCM 1318 / BCRC 11384 / CCUG 27702 / LMG 3730 / NBRC 12168 / NCIMB 10025 / NRRL B-2784 / 534).